The following is a 182-amino-acid chain: Peptidyl-prolyl cis-trans isomerase H (182 aa).

One can recognise a PPIase cyclophilin-type domain in the interval 15–181 (FFDITLGGEP…LDVVIAQCGE (167 aa)).

This sequence belongs to the cyclophilin-type PPIase family. PPIase H subfamily.

The protein resides in the nucleus. It carries out the reaction [protein]-peptidylproline (omega=180) = [protein]-peptidylproline (omega=0). PPIases accelerate the folding of proteins. It catalyzes the cis-trans isomerization of proline imidic peptide bonds in oligopeptides. The chain is Peptidyl-prolyl cis-trans isomerase H (cyp-3) from Neurospora crassa (strain ATCC 24698 / 74-OR23-1A / CBS 708.71 / DSM 1257 / FGSC 987).